A 135-amino-acid polypeptide reads, in one-letter code: Probable histone H2A.7 (135 aa).

Belongs to the histone H2A family. In terms of assembly, the nucleosome is a histone octamer containing two molecules each of H2A, H2B, H3 and H4 assembled in one H3-H4 heterotetramer and two H2A-H2B heterodimers. The octamer wraps approximately 147 bp of DNA.

It localises to the nucleus. It is found in the chromosome. Functionally, core component of nucleosome. Nucleosomes wrap and compact DNA into chromatin, limiting DNA accessibility to the cellular machineries which require DNA as a template. Histones thereby play a central role in transcription regulation, DNA repair, DNA replication and chromosomal stability. DNA accessibility is regulated via a complex set of post-translational modifications of histones, also called histone code, and nucleosome remodeling. The sequence is that of Probable histone H2A.7 from Oryza sativa subsp. indica (Rice).